We begin with the raw amino-acid sequence, 355 residues long: Neutral protease 2 homolog MEP6 (355 aa).

A signal peptide spans 1-19 (MRLSSSLIALVALAGQALA). The propeptide occupies 20–179 (LPFNELAERD…ASAIPELNKR (160 aa)). Disulfide bonds link C187/C259 and C266/C283. H307 contributes to the Zn(2+) binding site. The active site involves E308. Positions 311 and 322 each coordinate Zn(2+).

The protein belongs to the peptidase M35 family. Zn(2+) is required as a cofactor.

It localises to the secreted. The enzyme catalyses Preferential cleavage of bonds with hydrophobic residues in P1'. Also 3-Asn-|-Gln-4 and 8-Gly-|-Ser-9 bonds in insulin B chain.. In terms of biological role, secreted metalloproteinase that allows assimilation of proteinaceous substrates. Shows high activities on basic nuclear substrates such as histone and protamine. May be involved in virulence. The polypeptide is Neutral protease 2 homolog MEP6 (MEP6) (Coccidioides posadasii (strain C735) (Valley fever fungus)).